We begin with the raw amino-acid sequence, 274 residues long: Centromere protein K (274 aa).

The segment at 1-21 (MSGYQHELPPNISKTSPAPEE) is disordered. The stretch at 96-159 (KEELEKIAQE…NQLTAFSEKR (64 aa)) forms a coiled coil.

It belongs to the CENP-K/MCM22 family.

The protein resides in the nucleus. The protein localises to the chromosome. It is found in the centromere. Its subcellular location is the kinetochore. In terms of biological role, probable component of a centromeric complex involved in assembly of kinetochore proteins, mitotic progression and chromosome segregation. This Xenopus laevis (African clawed frog) protein is Centromere protein K (cenpk).